Here is a 364-residue protein sequence, read N- to C-terminus: D-alanine--D-alanine ligase A (364 aa).

Residues 145–348 form the ATP-grasp domain; that stretch reads KRLLRDAGLN…YTDLITRLIE (204 aa). Position 175-230 (175-230) interacts with ATP; the sequence is ESKLGLPLFVKPANQGSSVGVSKVTSEEQYAIAVDLAFEFDHKVIVEQGIKGREIE. Residues D302, E315, and N317 each coordinate Mg(2+).

The protein belongs to the D-alanine--D-alanine ligase family. It depends on Mg(2+) as a cofactor. Requires Mn(2+) as cofactor.

Its subcellular location is the cytoplasm. It catalyses the reaction 2 D-alanine + ATP = D-alanyl-D-alanine + ADP + phosphate + H(+). It functions in the pathway cell wall biogenesis; peptidoglycan biosynthesis. In terms of biological role, cell wall formation. This chain is D-alanine--D-alanine ligase A (ddlA), found in Escherichia coli O157:H7.